The following is a 215-amino-acid chain: Ectodysplasin-A receptor-associated adapter protein (215 aa).

Disordered regions lie at residues 1-41 (MGLR…FNMS) and 62-86 (LNCP…TGDP). Positions 17–28 (GHQEDHMVKEPV) are enriched in basic and acidic residues. The Death domain maps to 123–202 (DVIRIKLDPC…KVLRRWVDEE (80 aa)).

As to quaternary structure, self-associates and binds EDAR, TRAF1, TRAF2 and TRAF3. As to expression, detected in adult pancreas, placenta and fetal skin, and at lower levels in lung, thymus, prostate and testis.

Its subcellular location is the cytoplasm. Its function is as follows. Adapter protein that interacts with EDAR DEATH domain and couples the receptor to EDA signaling pathway during morphogenesis of ectodermal organs. Mediates the activation of NF-kappa-B. The polypeptide is Ectodysplasin-A receptor-associated adapter protein (EDARADD) (Homo sapiens (Human)).